The following is a 62-amino-acid chain: UPF0434 protein BP2767 (62 aa).

Belongs to the UPF0434 family.

The polypeptide is UPF0434 protein BP2767 (Bordetella pertussis (strain Tohama I / ATCC BAA-589 / NCTC 13251)).